A 369-amino-acid chain; its full sequence is Anhydro-N-acetylmuramic acid kinase (369 aa).

12-19 (GTSMDGVD) contacts ATP.

The protein belongs to the anhydro-N-acetylmuramic acid kinase family.

It carries out the reaction 1,6-anhydro-N-acetyl-beta-muramate + ATP + H2O = N-acetyl-D-muramate 6-phosphate + ADP + H(+). Its pathway is amino-sugar metabolism; 1,6-anhydro-N-acetylmuramate degradation. It functions in the pathway cell wall biogenesis; peptidoglycan recycling. Its function is as follows. Catalyzes the specific phosphorylation of 1,6-anhydro-N-acetylmuramic acid (anhMurNAc) with the simultaneous cleavage of the 1,6-anhydro ring, generating MurNAc-6-P. Is required for the utilization of anhMurNAc either imported from the medium or derived from its own cell wall murein, and thus plays a role in cell wall recycling. This Shewanella woodyi (strain ATCC 51908 / MS32) protein is Anhydro-N-acetylmuramic acid kinase.